The chain runs to 430 residues: Phosphomethylpyrimidine synthase (430 aa).

Substrate-binding positions include asparagine 67, methionine 96, tyrosine 125, histidine 161, 183-185 (SRG), 224-227 (DALR), and glutamate 263. Zn(2+) is bound at residue histidine 267. Tyrosine 290 contributes to the substrate binding site. Histidine 331 provides a ligand contact to Zn(2+). 3 residues coordinate [4Fe-4S] cluster: cysteine 406, cysteine 409, and cysteine 413.

It belongs to the ThiC family. In terms of assembly, homodimer. [4Fe-4S] cluster serves as cofactor.

The catalysed reaction is 5-amino-1-(5-phospho-beta-D-ribosyl)imidazole + S-adenosyl-L-methionine = 4-amino-2-methyl-5-(phosphooxymethyl)pyrimidine + CO + 5'-deoxyadenosine + formate + L-methionine + 3 H(+). Its pathway is cofactor biosynthesis; thiamine diphosphate biosynthesis. Its function is as follows. Catalyzes the synthesis of the hydroxymethylpyrimidine phosphate (HMP-P) moiety of thiamine from aminoimidazole ribotide (AIR) in a radical S-adenosyl-L-methionine (SAM)-dependent reaction. This Campylobacter jejuni (strain RM1221) protein is Phosphomethylpyrimidine synthase.